Reading from the N-terminus, the 487-residue chain is UDP-N-acetylmuramoyl-L-alanyl-D-glutamate--2,6-diaminopimelate ligase (487 aa).

UDP-N-acetyl-alpha-D-muramoyl-L-alanyl-D-glutamate contacts are provided by L23 and S25. 108–114 (GTNGKTS) provides a ligand contact to ATP. Residues 150 to 151 (TT), S177, Q183, and R185 contribute to the UDP-N-acetyl-alpha-D-muramoyl-L-alanyl-D-glutamate site. Residue K217 is modified to N6-carboxylysine. Residues R378, 402 to 405 (DNPR), G453, and E457 contribute to the meso-2,6-diaminopimelate site. The Meso-diaminopimelate recognition motif signature appears at 402-405 (DNPR).

The protein belongs to the MurCDEF family. MurE subfamily. Mg(2+) serves as cofactor. Post-translationally, carboxylation is probably crucial for Mg(2+) binding and, consequently, for the gamma-phosphate positioning of ATP.

The protein resides in the cytoplasm. It catalyses the reaction UDP-N-acetyl-alpha-D-muramoyl-L-alanyl-D-glutamate + meso-2,6-diaminopimelate + ATP = UDP-N-acetyl-alpha-D-muramoyl-L-alanyl-gamma-D-glutamyl-meso-2,6-diaminopimelate + ADP + phosphate + H(+). The protein operates within cell wall biogenesis; peptidoglycan biosynthesis. Functionally, catalyzes the addition of meso-diaminopimelic acid to the nucleotide precursor UDP-N-acetylmuramoyl-L-alanyl-D-glutamate (UMAG) in the biosynthesis of bacterial cell-wall peptidoglycan. In Pseudomonas aeruginosa (strain ATCC 15692 / DSM 22644 / CIP 104116 / JCM 14847 / LMG 12228 / 1C / PRS 101 / PAO1), this protein is UDP-N-acetylmuramoyl-L-alanyl-D-glutamate--2,6-diaminopimelate ligase.